We begin with the raw amino-acid sequence, 157 residues long: Probable succinate transporter subunit YjjB (157 aa).

A run of 4 helical transmembrane segments spans residues isoleucine 15–leucine 35, methionine 50–valine 70, valine 87–isoleucine 107, and leucine 121–valine 141.

Belongs to the ThrE exporter (TC 2.A.79) family. In terms of assembly, the transporter is composed of YjjB and YjjP.

It is found in the cell inner membrane. Its function is as follows. Involved in succinate export with YjjP. Both proteins are required for export. This is Probable succinate transporter subunit YjjB from Shigella dysenteriae serotype 1 (strain Sd197).